The sequence spans 399 residues: Forkhead box protein Q1 (399 aa).

The disordered stretch occupies residues 1–112 (MKLEVFAPRA…EGARSKPYTR (112 aa)). Over residues 32–54 (LSAAGDDSLGSDGDCAANSPAAG) the composition is skewed to low complexity. The span at 55 to 66 (SGAGDLEGGGGE) shows a compositional bias: gly residues. Positions 114–205 (PKPPYSYIAL…SEYTFADGVF (92 aa)) form a DNA-binding region, fork-head. The interval 211-263 (RLSHRTTVSASGYGGGSPPGPAGTPQPAPTAGSSPIARSPARQEEGSSPASKF) is disordered. The span at 228–238 (PPGPAGTPQPA) shows a compositional bias: pro residues.

The protein resides in the nucleus. In terms of biological role, plays a role in hair follicle differentiation. The sequence is that of Forkhead box protein Q1 (Foxq1) from Rattus norvegicus (Rat).